A 487-amino-acid chain; its full sequence is N-succinylglutamate 5-semialdehyde dehydrogenase (487 aa).

221–226 (GSSDTG) serves as a coordination point for NAD(+). Catalysis depends on residues E244 and C278.

It belongs to the aldehyde dehydrogenase family. AstD subfamily.

It carries out the reaction N-succinyl-L-glutamate 5-semialdehyde + NAD(+) + H2O = N-succinyl-L-glutamate + NADH + 2 H(+). The protein operates within amino-acid degradation; L-arginine degradation via AST pathway; L-glutamate and succinate from L-arginine: step 4/5. Its function is as follows. Catalyzes the NAD-dependent reduction of succinylglutamate semialdehyde into succinylglutamate. This Burkholderia pseudomallei (strain 1106a) protein is N-succinylglutamate 5-semialdehyde dehydrogenase.